Reading from the N-terminus, the 385-residue chain is MLWKLLLRSQSCRLCSFRKMRSPPKYRPFLACFTYTTDKQSSKENTRTVEKLYKCSVDIRKIRRLKGWVLLEDETYVEEIANILQELGADETAVASILERCPEAIVCSPTAVNTQRKLWQLVCKNEEELIKLIEQFPESFFTIKDQENQKLNVQFFQELGLKNVVISRLLTAAPNVFHNPVEKNKQMVRILQESYLDVGGSEANMKVWLLKLLSQNPFILLNSPTAIKETLEFLQEQGFTSFEILQLLSKLKGFLFQLCPRSIQNSISFSKNAFKCTDHDLKQLVLKCPALLYYSVPVLEERMQGLLREGISIAQIRETPMVLELTPQIVQYRIRKLNSSGYRIKDGHLANLNGSKKEFEANFGKIQAKKVRPLFNPVAPLNVEE.

The N-terminal 35 residues, 1–35 (MLWKLLLRSQSCRLCSFRKMRSPPKYRPFLACFTY), are a transit peptide targeting the mitochondrion.

The protein belongs to the mTERF family. In terms of assembly, monomer. As to expression, expressed in skeletal muscle, heart, liver and pancreas.

The protein resides in the mitochondrion. It is found in the mitochondrion matrix. Its subcellular location is the mitochondrion nucleoid. Functionally, binds mitochondrial DNA and plays a role in the regulation of transcription of mitochondrial mRNA and rRNA species. This chain is Transcription termination factor 2, mitochondrial (MTERF2), found in Homo sapiens (Human).